The primary structure comprises 347 residues: GMP reductase (347 aa).

108 to 131 (ADFEKTVQILALDPALNFVCIDVA) is a binding site for NADP(+). Residues Gly181 and Gly183 each contribute to the K(+) site. The active-site Thioimidate intermediate is Cys186. 216–239 (IVSDGGCTMPGDVAKAFGGGADFV) is an NADP(+) binding site.

It belongs to the IMPDH/GMPR family. GuaC type 1 subfamily. Homotetramer.

It carries out the reaction IMP + NH4(+) + NADP(+) = GMP + NADPH + 2 H(+). Functionally, catalyzes the irreversible NADPH-dependent deamination of GMP to IMP. It functions in the conversion of nucleobase, nucleoside and nucleotide derivatives of G to A nucleotides, and in maintaining the intracellular balance of A and G nucleotides. The protein is GMP reductase of Salmonella paratyphi B (strain ATCC BAA-1250 / SPB7).